A 248-amino-acid chain; its full sequence is DNA repair protein RecO (248 aa).

The protein belongs to the RecO family.

Involved in DNA repair and RecF pathway recombination. The chain is DNA repair protein RecO from Rubrobacter xylanophilus (strain DSM 9941 / JCM 11954 / NBRC 16129 / PRD-1).